Here is a 150-residue protein sequence, read N- to C-terminus: Geranyl diphosphate phosphohydrolase (150 aa).

In terms of domain architecture, Nudix hydrolase spans 14-147 (SIKVAVVVCL…DNVVQDGFNP (134 aa)). The Nudix box signature appears at 48 to 69 (GHLEFGESFEECAARELKEETD). Residues Glu-63 and Glu-67 each contribute to the Mg(2+) site.

The protein belongs to the Nudix hydrolase family. As to expression, expressed in petals. Little or no expression in stamens, sepals or young leaves.

The protein localises to the cytoplasm. The catalysed reaction is (2E)-geranyl diphosphate + H2O = (2E)-geranyl phosphate + phosphate + H(+). Its function is as follows. Involved in a cytosolic pathway for the biosynthesis of free monoterpene alcohols that contribute to fragrance. Lacks terpene synthase activity, but has a diphosphohydrolase activity with geranyl diphosphate and farnesyl diphosphate as substrates. No activity with 8-oxo-dGTP and dGTP and unable to dephosphorylate geranyl phosphate to geraniol. The protein is Geranyl diphosphate phosphohydrolase of Rosa hybrid cultivar.